Here is a 331-residue protein sequence, read N- to C-terminus: Induced myeloid leukemia cell differentiation protein Mcl-1 homolog (331 aa).

A PEST-like region spans residues 85–156 (LAVPPEEMAA…PPEEEEDDLY (72 aa)). Ser102 is modified (phosphoserine). Lys117 participates in a covalent cross-link: Glycyl lysine isopeptide (Lys-Gly) (interchain with G-Cter in ubiquitin). The segment at 130 to 154 (EAAKSSGADGSLPSTPPPPEEEEDD) is disordered. Ser140 carries the phosphoserine; by GSK3-alpha and GSK3-beta modification. Ser143 carries the phosphoserine modification. Thr144 bears the Phosphothreonine; by MAPK mark. Glycyl lysine isopeptide (Lys-Gly) (interchain with G-Cter in ubiquitin) cross-links involve residues Lys175 and Lys178. A BH3 motif is present at residues 190 to 204 (ALETLRRVGDGVQRN). The BH1 signature appears at 234–253 (VFKDGVTNWGRIVTLISFGA). The BH2 motif lies at 285–300 (DWLVKQRGWDGFVEFF). A helical transmembrane segment spans residues 308-330 (GIRNVLLAFAGVAGVGAGLAYLI).

Belongs to the Bcl-2 family. Interacts with HIF3A isoform 2 (via C-terminus domain). Interacts with BAD, BOK, BIK, BAX, BAK1, and TPT1. Interacts with BBC3, BMF and PMAIP1. Interacts with BOP. Interacts with BCL2L11; this interaction may sequester BCL2L11 and prevent its pro-apoptotic activity. Interacts with GIMAP5 and HSPA8/HSC70; the interaction between HSPA8 and MCL1 is impaired in the absence of GIMAP5. Cleaved by CASP3 during apoptosis, yielding a pro-apoptotic C-terminal fragment. Post-translationally, rapidly degraded in the absence of phosphorylation in the PEST region. In terms of processing, phosphorylated on Ser-140, by GSK3, in response to IL3/interleukin-3 withdrawal. Phosphorylation at Ser-140 induces ubiquitination and proteasomal degradation, abrogating the anti-apoptotic activity. Treatment with taxol or okadaic acid induces phosphorylation on additional sites. Ubiquitinated. Ubiquitination is induced by phosphorylation at Ser-140. Deubiquitinated by USP20; leading to increased stability.

It localises to the membrane. The protein localises to the cytoplasm. It is found in the mitochondrion. The protein resides in the nucleus. Its subcellular location is the nucleoplasm. Involved in the regulation of apoptosis versus cell survival, and in the maintenance of viability but not of proliferation. Mediates its effects by interactions with a number of other regulators of apoptosis. Isoform 2 has antiapoptotic activity. In Mus musculus (Mouse), this protein is Induced myeloid leukemia cell differentiation protein Mcl-1 homolog (Mcl1).